The following is a 196-amino-acid chain: MILPIIAYGDPVLKKKAKDIDKDYPKLEELINNMWDTMYNAYGVGLAAPQVGLPVRMFMIDPAPFADDEELDEAEKKVLMDLRKVFINPQIIEETGEEWAFSEGCLSIPEVREDVFRQPDITIEYHDENWEKHTETYSGLAARVIQHEYDHIEGILFTDKLSSLKKRLIKSKLANISKGKINVEYKMRFPNAKKAR.

2 residues coordinate Fe cation: cysteine 105 and histidine 147. Glutamate 148 is an active-site residue. Histidine 151 serves as a coordination point for Fe cation.

This sequence belongs to the polypeptide deformylase family. It depends on Fe(2+) as a cofactor.

It catalyses the reaction N-terminal N-formyl-L-methionyl-[peptide] + H2O = N-terminal L-methionyl-[peptide] + formate. Functionally, removes the formyl group from the N-terminal Met of newly synthesized proteins. Requires at least a dipeptide for an efficient rate of reaction. N-terminal L-methionine is a prerequisite for activity but the enzyme has broad specificity at other positions. The chain is Peptide deformylase from Christiangramia forsetii (strain DSM 17595 / CGMCC 1.15422 / KT0803) (Gramella forsetii).